The sequence spans 165 residues: 3-isopropylmalate dehydratase small subunit (165 aa).

It belongs to the LeuD family. LeuD type 2 subfamily. Heterodimer of LeuC and LeuD.

The enzyme catalyses (2R,3S)-3-isopropylmalate = (2S)-2-isopropylmalate. Its pathway is amino-acid biosynthesis; L-leucine biosynthesis; L-leucine from 3-methyl-2-oxobutanoate: step 2/4. Functionally, catalyzes the isomerization between 2-isopropylmalate and 3-isopropylmalate, via the formation of 2-isopropylmaleate. This Desulfovibrio desulfuricans (strain ATCC 27774 / DSM 6949 / MB) protein is 3-isopropylmalate dehydratase small subunit.